A 388-amino-acid polypeptide reads, in one-letter code: Plasminogen-binding group A streptococcal M-like protein PAM (388 aa).

An N-terminal signal peptide occupies residues 1–29; that stretch reads RKLKTGTASVAVALTVVGAGLASQTEVKA. Residues 85 to 113 are able to bind plasminogen; that stretch reads VEKLTADAELQRLKNERHEEAELERLKSE. An A-1 repeat occupies 91–103; the sequence is DAELQRLKNERHE. A 2 X approximate tandem repeats, type a region spans residues 91 to 116; that stretch reads DAELQRLKNERHEEAELERLKSERHD. Basic and acidic residues-rich tracts occupy residues 95–137, 145–168, 176–189, 218–231, and 260–269; these read QRLK…KQEH, INEKEAEAKEKEAEQKKLKEEKQI, LRRDLDASREAKKQ, and LRRDLDASRE. Disordered stretches follow at residues 95 to 189, 204 to 231, and 248 to 269; these read QRLK…AKKQ, VKEEKQISDASRQGLRRDLDASREAKKQ, and EEKQISDASRQGLRRDLDASRE. Residues 104 to 116 form an A-2 repeat; sequence EAELERLKSERHD. The stretch at 147–153 is one B-1 repeat; the sequence is EKEAEAK. Positions 147-161 are 2 X tandem repeats, type b; it reads EKEAEAKEKEAEQKK. The stretch at 154 to 159 is one B-2 repeat; the sequence is EKEAEQ. C repeat units follow at residues 160–194, 202–236, and 244–278; these read KKLKEEKQISDASRQGLRRDLDASREAKKQVEKDL, DKVKEEKQISDASRQGLRRDLDASREAKKQVEKGL, and DKVKEEKQISDASRQGLRRDLDASREAKKQVEKAL. D repeat units lie at residues 311–316, 317–322, 325–330, and 332–337; these read AKLEAE, AKALKE, AKQAEE, and AKLRAE. Residues 331–340 show a composition bias toward basic and acidic residues; it reads LAKLRAEKAS. The segment at 331-388 is disordered; that stretch reads LAKLRAEKASDSQTPDAKPGNKAVPGKGQAPQAGTKPNQNKAPMKETKRQLPSTGETT. The LPXTG sorting signal motif lies at 381–385; sequence LPSTG. At threonine 384 the chain carries Pentaglycyl murein peptidoglycan amidated threonine. A propeptide spans 385–388 (removed by sortase); that stretch reads GETT.

This sequence belongs to the M protein family.

The protein resides in the secreted. It localises to the cell wall. Functionally, binds to human plasminogen (and plasmin) via its kringle repeats. Also binds to albumin, immunoglobulin G and fibrinogen. Could provide the bacteria with a mechanism for invasion, as streptococcal-bound plasmin could permit tissue penetration. The polypeptide is Plasminogen-binding group A streptococcal M-like protein PAM (pam) (Streptococcus pyogenes).